The primary structure comprises 374 residues: Methylthioribose-1-phosphate isomerase (374 aa).

Catalysis depends on aspartate 251, which acts as the Proton donor.

It belongs to the eIF-2B alpha/beta/delta subunits family. MtnA subfamily.

The protein localises to the cytoplasm. It localises to the nucleus. The enzyme catalyses 5-(methylsulfanyl)-alpha-D-ribose 1-phosphate = 5-(methylsulfanyl)-D-ribulose 1-phosphate. It functions in the pathway amino-acid biosynthesis; L-methionine biosynthesis via salvage pathway; L-methionine from S-methyl-5-thio-alpha-D-ribose 1-phosphate: step 1/6. Functionally, catalyzes the interconversion of methylthioribose-1-phosphate (MTR-1-P) into methylthioribulose-1-phosphate (MTRu-1-P). This Oryza sativa subsp. japonica (Rice) protein is Methylthioribose-1-phosphate isomerase (IDI2).